A 944-amino-acid chain; its full sequence is Nonsense-mediated mRNA decay factor SMG8 (944 aa).

Disordered regions lie at residues 560–597 (NTGKSGAPQDEDAGEDEAEEEEGQERELPTKKKLQNTA) and 628–653 (QASSEQLSNSEQNTTSSGTSSADTEN). Residues 568-583 (QDEDAGEDEAEEEEGQ) are compositionally biased toward acidic residues. A compositionally biased stretch (polar residues) spans 628 to 650 (QASSEQLSNSEQNTTSSGTSSAD).

This sequence belongs to the SMG8 family.

Its function is as follows. Involved in nonsense-mediated decay (NMD) of mRNAs containing premature stop codons. Probable component of kinase complex containing nonC and recruited to stalled ribosomes. This is Nonsense-mediated mRNA decay factor SMG8 from Drosophila simulans (Fruit fly).